Here is a 344-residue protein sequence, read N- to C-terminus: Large ribosomal subunit protein uL3 (344 aa).

The protein belongs to the universal ribosomal protein uL3 family. In terms of assembly, part of the 50S ribosomal subunit. Forms a cluster with proteins L14 and L24e.

Its function is as follows. One of the primary rRNA binding proteins, it binds directly near the 3'-end of the 23S rRNA, where it nucleates assembly of the 50S subunit. The protein is Large ribosomal subunit protein uL3 of Aeropyrum pernix (strain ATCC 700893 / DSM 11879 / JCM 9820 / NBRC 100138 / K1).